The primary structure comprises 240 residues: UDP-2,3-diacylglucosamine hydrolase (240 aa).

Mn(2+) is bound by residues D8, H10, D41, N79, and H114. 79–80 (NR) contacts substrate. Residues D122, S160, N164, K167, and H195 each coordinate substrate. Residues H195 and H197 each coordinate Mn(2+).

The protein belongs to the LpxH family. Requires Mn(2+) as cofactor.

The protein resides in the cell inner membrane. It catalyses the reaction UDP-2-N,3-O-bis[(3R)-3-hydroxytetradecanoyl]-alpha-D-glucosamine + H2O = 2-N,3-O-bis[(3R)-3-hydroxytetradecanoyl]-alpha-D-glucosaminyl 1-phosphate + UMP + 2 H(+). It participates in glycolipid biosynthesis; lipid IV(A) biosynthesis; lipid IV(A) from (3R)-3-hydroxytetradecanoyl-[acyl-carrier-protein] and UDP-N-acetyl-alpha-D-glucosamine: step 4/6. In terms of biological role, hydrolyzes the pyrophosphate bond of UDP-2,3-diacylglucosamine to yield 2,3-diacylglucosamine 1-phosphate (lipid X) and UMP by catalyzing the attack of water at the alpha-P atom. Involved in the biosynthesis of lipid A, a phosphorylated glycolipid that anchors the lipopolysaccharide to the outer membrane of the cell. In Klebsiella pneumoniae subsp. pneumoniae (strain ATCC 700721 / MGH 78578), this protein is UDP-2,3-diacylglucosamine hydrolase.